The sequence spans 372 residues: Putative isochorismate synthase MenF (372 aa).

Residue K119 is the Proton acceptor of the active site. The active-site Proton donor is E175. The Mg(2+) site is built by E219 and E356.

Belongs to the isochorismate synthase family. Mg(2+) is required as a cofactor.

It carries out the reaction chorismate = isochorismate. It functions in the pathway quinol/quinone metabolism; 1,4-dihydroxy-2-naphthoate biosynthesis; 1,4-dihydroxy-2-naphthoate from chorismate: step 1/7. Its pathway is quinol/quinone metabolism; menaquinone biosynthesis. Catalyzes the conversion of chorismate to isochorismate. The protein is Putative isochorismate synthase MenF (menF) of Mycobacterium tuberculosis (strain CDC 1551 / Oshkosh).